Reading from the N-terminus, the 599-residue chain is Elongation factor 4 (599 aa).

Positions serine 5 to threonine 187 constitute a tr-type G domain. Residues aspartate 17 to threonine 22 and asparagine 134 to aspartate 137 each bind GTP.

The protein belongs to the TRAFAC class translation factor GTPase superfamily. Classic translation factor GTPase family. LepA subfamily.

It localises to the cell inner membrane. The enzyme catalyses GTP + H2O = GDP + phosphate + H(+). In terms of biological role, required for accurate and efficient protein synthesis under certain stress conditions. May act as a fidelity factor of the translation reaction, by catalyzing a one-codon backward translocation of tRNAs on improperly translocated ribosomes. Back-translocation proceeds from a post-translocation (POST) complex to a pre-translocation (PRE) complex, thus giving elongation factor G a second chance to translocate the tRNAs correctly. Binds to ribosomes in a GTP-dependent manner. The chain is Elongation factor 4 from Stutzerimonas stutzeri (strain A1501) (Pseudomonas stutzeri).